A 371-amino-acid chain; its full sequence is MHRQSFFLVPLICLSSALWAAPATVNVEVLQDKLDHPWALAFLPDNHGMLITLRGGELRHWQAGKGLSAPLSGVPDVWAHGQGGLLDVVLAPDFAQSRRIWLSYSEVGDDGKAGTAVGYGRLSDDLSKVTDFRTVFRQMPKLSTGNHFGGRLVFDGKGYLFIALGENNQRPTAQDLDKLQGKLVRLTDQGEIPDDNPFIKESGARAEIWSYGIRNPQGMAMNPWSNALWLNEHGPRGGDEINIPQKGKNYGWPLATWGINYSGFKIPEAKGEIVAGTEQPVFYWKDSPAVSGMAFYNSDKFPQWQQKLFIGALKDKDVIVMSVNGDKVTEDGRILTDRGQRIRDVRTGPDGYLYVLTDESSGELLKVSPRN.

The first 20 residues, 1–20 (MHRQSFFLVPLICLSSALWA), serve as a signal peptide directing secretion. A pyrroloquinoline quinone-binding site is contributed by glutamine 82. The active-site Proton acceptor is the histidine 147. Positions 214-215 (RN) are PQQ. Glutamate 240 and tyrosine 250 together coordinate Ca(2+). Tyrosine 261 serves as a coordination point for pyrroloquinoline quinone. PQQ regions lie at residues 312–314 (ALK) and 341–343 (RIR).

The protein belongs to the PQQ oxidoreductase GdhB family. Monomer. Ca(2+) serves as cofactor. Pyrroloquinoline quinone is required as a cofactor.

It localises to the cell outer membrane. Its function is as follows. Aldose sugar dehydrogenase with broad substrate specificity. The physiological substrate is unknown. Can oxidize glucose to gluconolactone. Can also utilize D-arabinose, L-arabinose and 2-deoxy-glucose. Has higher activity towards oligomeric sugars, such as maltose, maltotriose or cellobiose. It may function to input sugar-derived electrons into the respiratory network. In Escherichia coli (strain K12), this protein is Aldose sugar dehydrogenase YliI (yliI).